Reading from the N-terminus, the 690-residue chain is Secreted LysM effector Vd5LysM (690 aa).

N-linked (GlcNAc...) asparagine glycans are attached at residues asparagine 4 and asparagine 69. 3 consecutive LysM domains span residues 203–248 (TQYT…SLCI), 253–301 (DTVT…TLCI), and 341–387 (RWYN…SYCV). N-linked (GlcNAc...) asparagine glycans are attached at residues asparagine 260, asparagine 295, asparagine 375, asparagine 410, asparagine 423, and asparagine 492. The segment at 523–546 (PATATTGDGGPTPPAPTHSGQPQD) is disordered. In terms of domain architecture, LysM 4 spans 549 to 596 (TWHVVSSGDSCQSVADDAGISRDQFHDWNPAVGRDCSTNFWLGQAYCV). The segment covering 606 to 619 (STVASSTTSSVTPG) has biased composition (low complexity). A disordered region spans residues 606–636 (STVASSTTSSVTPGPSKPEPPGPTHTGQPSD). The 48-residue stretch at 639–686 (EWDVVETGDTCGSLAESNDISLSQFFDWNPAVSRDCVANFWIGQAYCI) folds into the LysM 5 domain.

Belongs to the secreted LysM effector family.

Functionally, might have a role in sequestration of chitin oligosaccharides (breakdown products of fungal cell walls that are released during invasion and act as triggers of host immunity) to dampen host defense. Does not play an important role during host colonization. This chain is Secreted LysM effector Vd5LysM, found in Verticillium dahliae (strain VdLs.17 / ATCC MYA-4575 / FGSC 10137) (Verticillium wilt).